A 334-amino-acid polypeptide reads, in one-letter code: N-chimaerin (334 aa).

Residues 1 to 10 (MPSKESWSGR) show a composition bias toward polar residues. The tract at residues 1–22 (MPSKESWSGRKTNRATVHKSKQ) is disordered. Thr67 carries the post-translational modification Phosphothreonine. A Phorbol-ester/DAG-type zinc finger spans residues 80–130 (VHNFKVHTFRGPHWCEYCANFMWGLIAQGVKCADCGLNVHKQCSKMVPNDC). The Rho-GAP domain occupies 143–334 (CDLTTLVKAR…LLIKNEDILF (192 aa)). Thr215 carries the post-translational modification Phosphothreonine.

Interacts with EPHA4; effector of EPHA4 in axon guidance linking EPHA4 activation to RAC1 regulation. Post-translationally, phosphorylated. Phosphorylation is EPHA4 kinase activity-dependent.

In terms of biological role, GTPase-activating protein for p21-rac and a phorbol ester receptor. Involved in the assembly of neuronal locomotor circuits as a direct effector of EPHA4 in axon guidance. The protein is N-chimaerin (CHN1) of Bos taurus (Bovine).